Reading from the N-terminus, the 455-residue chain is L-serine dehydratase (455 aa).

The protein belongs to the iron-sulfur dependent L-serine dehydratase family. The cofactor is [4Fe-4S] cluster.

The catalysed reaction is L-serine = pyruvate + NH4(+). The protein operates within carbohydrate biosynthesis; gluconeogenesis. The polypeptide is L-serine dehydratase (sdaA) (Helicobacter pylori (strain J99 / ATCC 700824) (Campylobacter pylori J99)).